Reading from the N-terminus, the 232-residue chain is Sugar fermentation stimulation protein homolog (232 aa).

Belongs to the SfsA family.

The polypeptide is Sugar fermentation stimulation protein homolog (Ruegeria sp. (strain TM1040) (Silicibacter sp.)).